The following is a 310-amino-acid chain: Olfactory receptor 4C16 (310 aa).

The Extracellular portion of the chain corresponds to 1 to 23 (MQLNNNVTEFILLGLTQDPFWKK). N6 carries an N-linked (GlcNAc...) asparagine glycan. A helical transmembrane segment spans residues 24-47 (IVFVIFLRLYLGTLLGNLLIIISV). Residues 48–55 (KTSQALKN) lie on the Cytoplasmic side of the membrane. A helical membrane pass occupies residues 56-77 (PMFFFLFYLSLSDTCLSTSITP). Over 78-98 (RMIVDALLKKTTISFSECMIQ) the chain is Extracellular. The cysteines at positions 95 and 187 are disulfide-linked. The chain crosses the membrane as a helical span at residues 99–118 (VFSSHVFGCLEIFILILTAV). Topologically, residues 119 to 137 (DRYVDICKPLHYMTIISQW) are cytoplasmic. Residues 138-156 (VCGVLMAVAWVGSCVHSLV) form a helical membrane-spanning segment. Residues 157-193 (QIFLALSLPFCGPNVINHCFCDLQPLLKQACSETYVV) are Extracellular-facing. The chain crosses the membrane as a helical span at residues 194–217 (NLLLVSNSGAICAVSYVMLIFSYV). Topologically, residues 218–233 (IFLHSLRNHSAEVIKK) are cytoplasmic. A helical transmembrane segment spans residues 234–256 (ALSTCVSHIIVVILFFGPCIFMY). At 257 to 267 (TCLATVFPMDK) the chain is on the extracellular side. The helical transmembrane segment at 268–287 (MIAVFYTVGTSFLNPVIYTL) threads the bilayer. The Cytoplasmic portion of the chain corresponds to 288–310 (KNTEVKSAMRKLWSKKLITDDKR).

Belongs to the G-protein coupled receptor 1 family.

The protein localises to the cell membrane. Odorant receptor. This Homo sapiens (Human) protein is Olfactory receptor 4C16 (OR4C16).